Here is a 629-residue protein sequence, read N- to C-terminus: ATP-dependent RNA helicase DBP6 (629 aa).

The interval 1 to 129 is disordered; the sequence is MFASRFDPSQ…GIEDEAASTH (129 aa). Acidic residues predominate over residues 72–84; it reads ASEEDSSEVEEEE. A phosphoserine mark is found at S73, S77, and S78. Positions 88 to 103 are enriched in polar residues; the sequence is STHSTVLSRFKQTVSL. Acidic residues predominate over residues 116 to 125; the sequence is KEDEGIEDEA. The short motif at 197-205 is the Q motif element; it reads TFPIQSIIL. In terms of domain architecture, Helicase ATP-binding spans 221 to 401; sequence RNFTRRIGDI…GLNLYKPKLF (181 aa). 234–241 is a binding site for ATP; the sequence is AATGSGKT. Residues 341-344 carry the DEAD box motif; the sequence is DEAD. Positions 437-603 constitute a Helicase C-terminal domain; the sequence is SICQFMAHSP…SVQPLELDFT (167 aa).

Belongs to the DEAD box helicase family. DDX51/DBP6 subfamily. In terms of assembly, associated with pre-ribosomal particles. Interacts with DBP9 and RSA3. Together with NOP8, URB1, URB2 and RSA3, forms an RNA-independent complex, which is required during early maturation of nascent 60S ribosomal subunits.

It is found in the nucleus. Its subcellular location is the nucleolus. It carries out the reaction ATP + H2O = ADP + phosphate + H(+). In terms of biological role, ATP-binding RNA helicase involved in the biogenesis of 60S ribosomal subunits and is required for the normal formation of 25S and 5.8S rRNAs. The sequence is that of ATP-dependent RNA helicase DBP6 (DBP6) from Saccharomyces cerevisiae (strain ATCC 204508 / S288c) (Baker's yeast).